The chain runs to 353 residues: Phosphate acyltransferase (353 aa).

This sequence belongs to the PlsX family. As to quaternary structure, homodimer. Probably interacts with PlsY.

It is found in the cytoplasm. The enzyme catalyses a fatty acyl-[ACP] + phosphate = an acyl phosphate + holo-[ACP]. Its pathway is lipid metabolism; phospholipid metabolism. Catalyzes the reversible formation of acyl-phosphate (acyl-PO(4)) from acyl-[acyl-carrier-protein] (acyl-ACP). This enzyme utilizes acyl-ACP as fatty acyl donor, but not acyl-CoA. The chain is Phosphate acyltransferase from Bradyrhizobium diazoefficiens (strain JCM 10833 / BCRC 13528 / IAM 13628 / NBRC 14792 / USDA 110).